Here is a 336-residue protein sequence, read N- to C-terminus: Meiotically up-regulated gene 33 protein (336 aa).

The tract at residues 232–336 (ISEDDGLKRG…KPSRFSWGRS (105 aa)) is disordered. Positions 250–262 (TFSNDSRSLSSYA) are enriched in polar residues.

It localises to the cytoplasm. In terms of biological role, has a role in meiosis. The sequence is that of Meiotically up-regulated gene 33 protein (mug33) from Schizosaccharomyces pombe (strain 972 / ATCC 24843) (Fission yeast).